A 331-amino-acid polypeptide reads, in one-letter code: uncharacterized protein (331 aa).

The protein belongs to the ornithine cyclodeaminase/mu-crystallin family.

This is an uncharacterized protein from Sinorhizobium fredii (strain NBRC 101917 / NGR234).